The following is a 448-amino-acid chain: Protein kinase C and casein kinase substrate in neurons protein 2 (448 aa).

Residues 11-282 (VEVSSDSFWE…NIKTADAVED (272 aa)) enclose the F-BAR domain. Residues 25-274 (KRTVKRIDDG…NIYRELEQNI (250 aa)) adopt a coiled-coil conformation. The tract at residues 315–386 (SRREKKKASD…DTNPFDEDTS (72 aa)) is disordered. Over residues 329–358 (TGINQTGDQVSQPNKHSSVSSYEKNQSYPT) the composition is skewed to polar residues. The NPF1 signature appears at 367–369 (NPF). An NPF2 motif is present at residues 379–381 (NPF). Positions 388–448 (VMEVRVRALY…YPANYVEPIQ (61 aa)) constitute an SH3 domain.

The protein belongs to the PACSIN family. In terms of processing, phosphorylated on serine residues. As to expression, detected in intestine, cardiac muscle, lung and brain (at protein level). Expressed in all tissues tested, including, gizzard, liver, cardiac muscle, skeletal muscle and skin.

The protein localises to the cytoplasm. It is found in the cytoskeleton. It localises to the cytoplasmic vesicle membrane. Its subcellular location is the cell projection. The protein resides in the ruffle membrane. The protein localises to the early endosome. It is found in the recycling endosome membrane. It localises to the cell membrane. Its subcellular location is the membrane. The protein resides in the caveola. The protein localises to the cell junction. It is found in the focal adhesion. Regulates the morphogenesis and endocytosis of caveolae. Lipid-binding protein that is able to promote the tubulation of the phosphatidic acid-containing membranes it preferentially binds. Plays a role in intracellular vesicle-mediated transport. Involved in the endocytosis of cell-surface receptors like the EGF receptor, contributing to its internalization in the absence of EGF stimulus. Essential for endothelial organization in sprouting angiogenesis, modulates CDH5-based junctions. Facilitates endothelial front-rear polarity during migration by recruiting EHD4 and MICALL1 to asymmetric adherens junctions between leader and follower cells. This Gallus gallus (Chicken) protein is Protein kinase C and casein kinase substrate in neurons protein 2 (PACSIN2).